Reading from the N-terminus, the 495-residue chain is OTU domain-containing protein CG3251 (495 aa).

The OTU domain maps to 29-150 (LFRKHMLGDA…MGHFETVLTM (122 aa)). The Tudor domain occupies 302-364 (NFKVGAKCQV…HPLPPDEFKA (63 aa)). Over residues 375–389 (LHNSQMGRQSVQGDQ) the composition is skewed to polar residues. The tract at residues 375-404 (LHNSQMGRQSVQGDQQGFVPDPMPGTAPSM) is disordered. Over residues 395–404 (DPMPGTAPSM) the composition is skewed to pro residues.

In terms of biological role, putative OTU-type deubiquitinase. Catalytically inactive towards all diubiquitin molecules and long K48- and K63- linked ubiquitin chains in vitro. Potential modulator of apoptosis. The chain is OTU domain-containing protein CG3251 from Drosophila melanogaster (Fruit fly).